A 398-amino-acid chain; its full sequence is Chalcone synthase 1 (398 aa).

58-65 contacts CoA; sequence KFKRMCDK. Residue C167 is the Acyl-thioester intermediate of the active site. Substrate contacts are provided by residues T200 and 219–220; that span reads GD. Residue A311 participates in CoA binding.

It belongs to the thiolase-like superfamily. Chalcone/stilbene synthases family. Homodimer.

The enzyme catalyses (E)-4-coumaroyl-CoA + 3 malonyl-CoA + 3 H(+) = 2',4,4',6'-tetrahydroxychalcone + 3 CO2 + 4 CoA. It participates in secondary metabolite biosynthesis; flavonoid biosynthesis. In terms of biological role, the primary product of this enzyme is 4,2',4',6'-tetrahydroxychalcone (also termed naringenin-chalcone or chalcone) which can under specific conditions spontaneously isomerize into naringenin. The chain is Chalcone synthase 1 (CHS1) from Oryza sativa subsp. japonica (Rice).